Reading from the N-terminus, the 216-residue chain is Ras-related protein Rab-2B (216 aa).

Residues G16, V17, G18, K19, S20, C21, and T38 each contribute to the GTP site. Mg(2+) is bound at residue S20. The short motif at 37-42 (LTIGVE) is the Switch 1 element. T38 and D61 together coordinate Mg(2+). A Switch 2 motif is present at residues 63–72 (AGQESFRSIT). GTP-binding residues include G64, N119, K120, D122, A150, and K151. A compositionally biased stretch (polar residues) spans 189–207 (PQQSITSSVGPCSPQQNVS). Positions 189–216 (PQQSITSSVGPCSPQQNVSDIGPDSGCC) are disordered. Residues C215 and C216 are each lipidated (S-geranylgeranyl cysteine).

It belongs to the small GTPase superfamily. Rab family. In terms of assembly, interacts (in GTP-bound form) with GARIN4 (via N-terminus). Interacts (in GTP-bound form) with GARIN5A. Interacts (in GTP-bound form) with GARIN1B. Interacts with VPS39 and VPS41. It depends on Mg(2+) as a cofactor.

Its subcellular location is the cell membrane. It localises to the endoplasmic reticulum membrane. The protein resides in the golgi apparatus membrane. The protein localises to the cytoplasmic vesicle. It is found in the secretory vesicle. Its subcellular location is the acrosome. It localises to the autophagosome membrane. The enzyme catalyses GTP + H2O = GDP + phosphate + H(+). Its activity is regulated as follows. Regulated by guanine nucleotide exchange factors (GEFs) which promote the exchange of bound GDP for free GTP, GTPase activating proteins (GAPs) which increase the GTP hydrolysis activity, and GDP dissociation inhibitors (GDIs) which inhibit the dissociation of the nucleotide from the GTPase. Its function is as follows. The small GTPases Rab are key regulators of intracellular membrane trafficking, from the formation of transport vesicles to their fusion with membranes. Rabs cycle between active GTP-bound and inactive GDP-bound states. In their active state, drive transport of vesicular carriers from donor organelles to acceptor organelles to regulate the membrane traffic that maintains organelle identity and morphology. Regulates the compacted morphology of the Golgi. Promotes cytosolic DNA-induced innate immune responses. Regulates IFN responses against DNA viruses by regulating the CGAS-STING signaling axis. Together with RAB2A redundantly required for efficient autophagic flux. The polypeptide is Ras-related protein Rab-2B (Rab2b) (Mus musculus (Mouse)).